The chain runs to 570 residues: MFS-type transporter ptmT (570 aa).

Over residues 1 to 11 (MPDSGNIQLDT) the composition is skewed to polar residues. The disordered stretch occupies residues 1–34 (MPDSGNIQLDTLQHKDHSQETTSHYEGGSQLPEQ). The next 14 helical transmembrane spans lie at 50–70 (GLIR…CVGL), 94–114 (WYVS…GKIY), 121–141 (WTYL…AITP), 151–171 (AISG…LSNI), 182–202 (AFIG…GGVF), 210–230 (WCFY…FLFM), 247–267 (GLDW…LLAL), 278–298 (NVRI…WLLI), 323–343 (IYTI…PIWF), 356–376 (IMNL…SVLI), 379–399 (VGYM…GAGL), 413–433 (IGYQ…PLLV), 445–465 (VATA…SAIA), and 517–537 (VTHT…GAFI). Asparagine 541 carries an N-linked (GlcNAc...) asparagine glycan. The tract at residues 550 to 570 (PEPLVPGGSHSGAERDSKNGT) is disordered. A compositionally biased stretch (basic and acidic residues) spans 561–570 (GAERDSKNGT).

This sequence belongs to the major facilitator superfamily. TCR/Tet family.

The protein resides in the cell membrane. In terms of biological role, MFS-type transporter; part of the gene cluster that mediates the biosynthesis of the indole diterpenes penitrems. May be involved in the efflux of penitrems. In Penicillium ochrochloron, this protein is MFS-type transporter ptmT.